The sequence spans 111 residues: Integration host factor subunit alpha (111 aa).

It belongs to the bacterial histone-like protein family. In terms of assembly, heterodimer of an alpha and a beta chain.

Its function is as follows. This protein is one of the two subunits of integration host factor, a specific DNA-binding protein that functions in genetic recombination as well as in transcriptional and translational control. This is Integration host factor subunit alpha from Polaromonas sp. (strain JS666 / ATCC BAA-500).